A 209-amino-acid polypeptide reads, in one-letter code: ATP-dependent Clp protease proteolytic subunit (209 aa).

Serine 107 acts as the Nucleophile in catalysis. The active site involves histidine 132.

This sequence belongs to the peptidase S14 family. Fourteen ClpP subunits assemble into 2 heptameric rings which stack back to back to give a disk-like structure with a central cavity, resembling the structure of eukaryotic proteasomes.

The protein resides in the cytoplasm. It carries out the reaction Hydrolysis of proteins to small peptides in the presence of ATP and magnesium. alpha-casein is the usual test substrate. In the absence of ATP, only oligopeptides shorter than five residues are hydrolyzed (such as succinyl-Leu-Tyr-|-NHMec, and Leu-Tyr-Leu-|-Tyr-Trp, in which cleavage of the -Tyr-|-Leu- and -Tyr-|-Trp bonds also occurs).. Its function is as follows. Cleaves peptides in various proteins in a process that requires ATP hydrolysis. Has a chymotrypsin-like activity. Plays a major role in the degradation of misfolded proteins. The polypeptide is ATP-dependent Clp protease proteolytic subunit (Ruegeria pomeroyi (strain ATCC 700808 / DSM 15171 / DSS-3) (Silicibacter pomeroyi)).